Reading from the N-terminus, the 688-residue chain is Glycine--tRNA ligase beta subunit (688 aa).

It belongs to the class-II aminoacyl-tRNA synthetase family. In terms of assembly, tetramer of two alpha and two beta subunits.

It is found in the cytoplasm. It catalyses the reaction tRNA(Gly) + glycine + ATP = glycyl-tRNA(Gly) + AMP + diphosphate. The protein is Glycine--tRNA ligase beta subunit of Histophilus somni (strain 2336) (Haemophilus somnus).